A 242-amino-acid chain; its full sequence is Adapter protein MecA (242 aa).

This sequence belongs to the MecA family. In terms of assembly, homodimer.

Its function is as follows. Enables the recognition and targeting of unfolded and aggregated proteins to the ClpC protease or to other proteins involved in proteolysis. In Streptococcus gordonii (strain Challis / ATCC 35105 / BCRC 15272 / CH1 / DL1 / V288), this protein is Adapter protein MecA.